Here is a 107-residue protein sequence, read N- to C-terminus: Large ribosomal subunit protein uL24 (107 aa).

Belongs to the universal ribosomal protein uL24 family. In terms of assembly, part of the 50S ribosomal subunit.

Its function is as follows. One of two assembly initiator proteins, it binds directly to the 5'-end of the 23S rRNA, where it nucleates assembly of the 50S subunit. Functionally, one of the proteins that surrounds the polypeptide exit tunnel on the outside of the subunit. This Pelotomaculum thermopropionicum (strain DSM 13744 / JCM 10971 / SI) protein is Large ribosomal subunit protein uL24.